Reading from the N-terminus, the 1149-residue chain is Protein deacetylase HDAC6 (1149 aa).

Positions 1 to 61 (MTSTGQDSST…KGKMKKLSQP (61 aa)) are disordered. The span at 18 to 29 (NPQSPLQESSAT) shows a compositional bias: polar residues. Serine 21 carries the phosphoserine modification. Arginine 32 carries the post-translational modification Omega-N-methylarginine. Residue serine 43 is modified to Phosphoserine. The Nuclear export signal motif lies at 66 to 75 (LVVGLQGLDL). Histone deacetylase stretches follow at residues 87–403 (LVFD…TLLG) and 481–799 (GLVY…SLLG). Histidine 215 (1) is an active-site residue. Histidine 610 serves as the catalytic 2. Positions 954-975 (ALGETEPTPPASHTNKQTTGAS) are disordered. Residues threonine 958, threonine 961, threonine 967, and threonine 971 each carry the phosphothreonine modification. A compositionally biased stretch (polar residues) spans 964 to 975 (ASHTNKQTTGAS). Serine 975 bears the Phosphoserine mark. The UBP-type zinc-finger motif lies at 1045–1143 (SWCPHLMAVC…NAAHQNKFGE (99 aa)). Zn(2+)-binding residues include cysteine 1047, histidine 1049, cysteine 1067, cysteine 1070, cysteine 1079, cysteine 1082, and cysteine 1087. A ubiquitin binding region spans residues 1088–1090 (SRY). Residues histidine 1094, histidine 1098, histidine 1104, cysteine 1117, and cysteine 1120 each coordinate Zn(2+). The ubiquitin binding stretch occupies residues 1116 to 1123 (WCYVCQAY). Position 1148 is a phosphoserine (serine 1148).

Belongs to the histone deacetylase family. HD type 2 subfamily. Forms a trimeric complex in the nucleus consisting of BANP, HDAC6 and KHDRBS1/SAM68; HDAC6 keeps KHDRBS1 in a deacetylated state which inhibits the inclusion of CD44 alternate exons. The complex is disrupted by MAPK1/MAPK3-mediated phosphorylation of BANP which results in BANP export to the cytoplasm. This facilitates acetylation of KHDRBS1 and CD44 variant exon inclusion. Interacts with SIRT2 (via both phosphorylated, unphosphorylated, active or inactive forms); the interaction is necessary for the complex to interact with alpha-tubulin. Under proteasome impairment conditions, interacts with UBD via its histone deacetylase 1 and UBP-type zinc-finger regions. Interacts with BBIP1, CBFA2T3, CYLD, DDIT3/CHOP, ZMYND15, F-actin and HDAC11. Interacts with RIPOR2; this interaction occurs during early myogenic differentiation and prevents HDAC6 to deacetylate tubulin. Interacts with AURKA; AURKA-mediated phosphorylation of HDAC6 promotes deacetylation of alpha-tubulin. Interacts with DYSF; this interaction occurs during early myogenic differentiation. Interacts with TPPP; inhibiting the tubulin deacetylase activity of HDAC6. Interacts with DYNLL1. Interacts with ATP13A2; the interaction results in recruitment of HDAC6 to lysosomes to promote CTTN deacetylation. Interacts with CCDC141 (via the N-terminal region); inhibiting the deacetylase activity of HDAC6. Interacts with IPO7; the interaction facilitates HDAC6 nuclear translocation in dental papilla cells. The cofactor is Zn(2+). In terms of processing, phosphorylated by AURKA; phosphorylation increases HDAC6-mediated deacetylation of alpha-tubulin and subsequent disassembly of cilia. Ubiquitinated. Its polyubiquitination however does not lead to its degradation. Post-translationally, sumoylated in vitro. As to expression, expressed in neurons of the cortex. Expressed in Purkinje cells. Detected in keratinocytes (at protein level).

The protein localises to the cytoplasm. The protein resides in the cytoskeleton. Its subcellular location is the nucleus. It localises to the perikaryon. It is found in the cell projection. The protein localises to the dendrite. The protein resides in the axon. Its subcellular location is the cilium. It localises to the microtubule organizing center. It is found in the centrosome. The protein localises to the cilium basal body. It catalyses the reaction N(6)-acetyl-L-lysyl-[protein] + H2O = L-lysyl-[protein] + acetate. It carries out the reaction N(6)-acetyl-L-lysyl-[alpha-tubulin] + H2O = L-lysyl-[alpha-tubulin] + acetate. It functions in the pathway protein modification; protein ubiquitination. Functionally, deacetylates a wide range of non-histone substrates. Plays a central role in microtubule-dependent cell motility by mediating deacetylation of tubulin. Required for cilia disassembly via deacetylation of alpha-tubulin. Alpha-tubulin deacetylation results in destabilization of dynamic microtubules. Promotes deacetylation of CTTN, leading to actin polymerization, promotion of autophagosome-lysosome fusion and completion of autophagy. Deacetylates SQSTM1. Deacetylates peroxiredoxins PRDX1 and PRDX2, decreasing their reducing activity. Deacetylates antiviral protein RIGI in the presence of viral mRNAs which is required for viral RNA detection by RIGI. Sequentially deacetylates and polyubiquitinates DNA mismatch repair protein MSH2 which leads to MSH2 degradation, reducing cellular sensitivity to DNA-damaging agents and decreasing cellular DNA mismatch repair activities. Deacetylates DNA mismatch repair protein MLH1 which prevents recruitment of the MutL alpha complex (formed by the MLH1-PMS2 heterodimer) to the MutS alpha complex (formed by the MSH2-MSH6 heterodimer), leading to tolerance of DNA damage. Deacetylates RHOT1/MIRO1 which blocks mitochondrial transport and mediates axon growth inhibition. Deacetylates transcription factor SP1 which leads to increased expression of ENG, positively regulating angiogenesis. Deacetylates KHDRBS1/SAM68 which regulates alternative splicing by inhibiting the inclusion of CD44 alternate exons. Promotes odontoblast differentiation following IPO7-mediated nuclear import and subsequent repression of RUNX2 expression. In addition to its protein deacetylase activity, plays a key role in the degradation of misfolded proteins: when misfolded proteins are too abundant to be degraded by the chaperone refolding system and the ubiquitin-proteasome, mediates the transport of misfolded proteins to a cytoplasmic juxtanuclear structure called aggresome. Probably acts as an adapter that recognizes polyubiquitinated misfolded proteins and target them to the aggresome, facilitating their clearance by autophagy. In Mus musculus (Mouse), this protein is Protein deacetylase HDAC6.